A 402-amino-acid chain; its full sequence is UDP-GlcNAc:betaGal beta-1,3-N-acetylglucosaminyltransferase 9 (402 aa).

Topologically, residues 1-10 (MRRRLRLRRD) are cytoplasmic. A helical; Signal-anchor for type II membrane protein transmembrane segment spans residues 11-27 (ALLTLLLGASLGLLLYA). The Lumenal portion of the chain corresponds to 28-402 (QRDGAAPTAS…VAAGPFQWDS (375 aa)). The segment covering 32–47 (AAPTASAPRGRGRAAP) has biased composition (low complexity). A disordered region spans residues 32–83 (AAPTASAPRGRGRAAPRPTPGPRAFQLPDAGAAPPAYEGDTPAPPTPTGPFD).

This sequence belongs to the glycosyltransferase 31 family.

Its subcellular location is the golgi apparatus membrane. The sequence is that of UDP-GlcNAc:betaGal beta-1,3-N-acetylglucosaminyltransferase 9 from Homo sapiens (Human).